The primary structure comprises 251 residues: Triosephosphate isomerase (251 aa).

Substrate contacts are provided by Asn-10 and Lys-12. Residue His-96 is the Electrophile of the active site. Glu-168 acts as the Proton acceptor in catalysis.

It belongs to the triosephosphate isomerase family. As to quaternary structure, homodimer.

It catalyses the reaction D-glyceraldehyde 3-phosphate = dihydroxyacetone phosphate. It participates in carbohydrate biosynthesis; gluconeogenesis. It functions in the pathway carbohydrate degradation; glycolysis; D-glyceraldehyde 3-phosphate from glycerone phosphate: step 1/1. The protein is Triosephosphate isomerase (tpiA) of Aspergillus oryzae (strain ATCC 42149 / RIB 40) (Yellow koji mold).